Consider the following 362-residue polypeptide: MTTVPRTTDLAAIRIWLTVVAGLIALMVLVGGATRLTESGLSIVEWKPVTGTLPPLSERAWTDAFEAYKTIPQYRQMNAGMTLHEFKTIFWWEWGHRLLGRVIGMVYLLPFLWFLWRGAVSGPLGRRLWLIFGLGALQGAVGWWMVASGLTERTEVAPVRLATHLSLALLIFAAIVWTLRRLAPRAEAEVPARLRLTAWGLVGVTFVQLYLGALVAGLRAGLVYNTWPDIDGGLIPKAANLWIQSPWWINLFENDLTVQFMHRMTAYTLFLLGAWHAFDVMRAGAGRTVVRGAHRLLAAILVQAGLGIATLLMVVPISLALLHQGTAIIVLTFAVLQAERLSPRRVAAVVVPQAAVAAGQAG.

5 consecutive transmembrane segments (helical) span residues 10 to 30, 102 to 122, 128 to 148, 159 to 179, and 198 to 218; these read LAAI…MVLV, VIGM…AVSG, LWLI…MVAS, VRLA…VWTL, and AWGL…VAGL. His-262 contributes to the heme binding site. 3 helical membrane-spanning segments follow: residues 266–286, 297–317, and 318–338; these read AYTL…AGAG, LAAI…VVPI, and SLAL…VLQA. Position 323 (His-323) interacts with heme.

It belongs to the COX15/CtaA family. Type 2 subfamily. As to quaternary structure, interacts with CtaB. Heme b is required as a cofactor.

It is found in the cell membrane. It catalyses the reaction Fe(II)-heme o + 2 A + H2O = Fe(II)-heme a + 2 AH2. The protein operates within porphyrin-containing compound metabolism; heme A biosynthesis; heme A from heme O: step 1/1. Functionally, catalyzes the conversion of heme O to heme A by two successive hydroxylations of the methyl group at C8. The first hydroxylation forms heme I, the second hydroxylation results in an unstable dihydroxymethyl group, which spontaneously dehydrates, resulting in the formyl group of heme A. The chain is Heme A synthase from Bradyrhizobium sp. (strain BTAi1 / ATCC BAA-1182).